The following is a 773-amino-acid chain: E3 ubiquitin-protein ligase RFWD3 (773 aa).

Disordered regions lie at residues 18 to 67 (VAEQ…SQVG), 92 to 117 (RVEN…IPVS), 139 to 230 (LRPP…EEVV), and 259 to 279 (GETL…SVSK). Ser47 bears the Phosphoserine; by ATM and ATR mark. The span at 50–59 (APPLLQPAPA) shows a compositional bias: low complexity. Ser64 bears the Phosphoserine; by ATM and ATR mark. A compositionally biased stretch (basic residues) spans 151 to 164 (RSRRRRGSASRRSR). A compositionally biased stretch (polar residues) spans 186–205 (VSRTQPHLPSMSQDSETRNP). Residues 207 to 221 (SEDLQVSSSSSSDSE) are compositionally biased toward low complexity. The segment covering 263 to 273 (PKQSPQKTNPL) has biased composition (polar residues). The RING-type; degenerate zinc-finger motif lies at 287 to 331 (CTICFEHWTNAGDHRLSALRCGHLFGYKCISKWLKGQARKCPQCN). Positions 361–403 (SLLKEQMLRKQAELESAQCRLQLQVLTDECSKLHSRVQDLQKL) form a coiled coil. 3 WD repeats span residues 494 to 536 (MHGK…QTYN), 538 to 576 (GRPV…SHIQ), and 582 to 627 (KARC…SHWP).

In terms of assembly, interacts with MDM2 and p53/TP53. Binds to the RPA complex via direct interaction with RPA2. Interacts with RAD51. Post-translationally, phosphorylated at Ser-46 and Ser-63 upon DNA damage by ATM or ATR. ATM phosphorylation occurs at early times upon DNA damage, while ATR is the major kinase at later times. Phosphorylation by ATM and ATR is required to stabilize p53/TP53. Part of the phosphorylation depends upon RPA2 presence.

The protein localises to the nucleus. The protein resides in the PML body. It is found in the cytoplasm. The catalysed reaction is S-ubiquitinyl-[E2 ubiquitin-conjugating enzyme]-L-cysteine + [acceptor protein]-L-lysine = [E2 ubiquitin-conjugating enzyme]-L-cysteine + N(6)-ubiquitinyl-[acceptor protein]-L-lysine.. It participates in protein modification; protein ubiquitination. E3 ubiquitin-protein ligase required for the repair of DNA interstrand cross-links (ICL) in response to DNA damage. Plays a key role in RPA-mediated DNA damage signaling and repair. Acts by mediating ubiquitination of the RPA complex (RPA1, RPA2 and RPA3 subunits) and RAD51 at stalled replication forks, leading to remove them from DNA damage sites and promote homologous recombination. Also mediates the ubiquitination of p53/TP53 in the late response to DNA damage, and acts as a positive regulator of p53/TP53 stability, thereby regulating the G1/S DNA damage checkpoint. May act by catalyzing the formation of short polyubiquitin chains on p53/TP53 that are not targeted to the proteasome. In response to ionizing radiation, interacts with MDM2 and enhances p53/TP53 ubiquitination, possibly by restricting MDM2 from extending polyubiquitin chains on ubiquitinated p53/TP53. Required to translesion DNA synthesis across DNA-protein cross-link adducts by catalyzing ubiquitination of proteins on single-stranded DNA (ssDNA). In Ailuropoda melanoleuca (Giant panda), this protein is E3 ubiquitin-protein ligase RFWD3 (RFWD3).